Reading from the N-terminus, the 135-residue chain is ATP synthase epsilon chain, chloroplastic (135 aa).

Belongs to the ATPase epsilon chain family. F-type ATPases have 2 components, CF(1) - the catalytic core - and CF(0) - the membrane proton channel. CF(1) has five subunits: alpha(3), beta(3), gamma(1), delta(1), epsilon(1). CF(0) has three main subunits: a, b and c.

Its subcellular location is the plastid. The protein resides in the chloroplast thylakoid membrane. In terms of biological role, produces ATP from ADP in the presence of a proton gradient across the membrane. The sequence is that of ATP synthase epsilon chain, chloroplastic from Marchantia polymorpha (Common liverwort).